We begin with the raw amino-acid sequence, 192 residues long: MAP6 domain-containing protein 1 (192 aa).

S-palmitoyl cysteine attachment occurs at residues cysteine 5, cysteine 10, and cysteine 11. Residues 36–106 form a disordered region; it reads LESEEPIPGG…RTKPSATPGR (71 aa). The residue at position 38 (serine 38) is a Phosphoserine. Positions 43–58 are enriched in low complexity; the sequence is PGGVPSRRGPSPAGSR. 2 mn regions span residues 123–136 and 158–170; these read TTSYRQEFQAWTGV and DGSPRAGFQAPEV. Phosphoserine is present on serine 160.

This sequence belongs to the STOP family. Interacts with calmodulin. In terms of processing, palmitoylated. Palmitoylation enhances association with microtubules.

It localises to the golgi apparatus. The protein resides in the cytoplasm. Its subcellular location is the cytoskeleton. Its function is as follows. May have microtubule-stabilizing activity. The chain is MAP6 domain-containing protein 1 (MAP6D1) from Bos taurus (Bovine).